The sequence spans 356 residues: GDSL esterase/lipase At5g37690 (356 aa).

The first 18 residues, 1 to 18 (MMILRLALAIVISTYATA), serve as a signal peptide directing secretion. Catalysis depends on Ser-34, which acts as the Nucleophile. Asn-116 and Asn-291 each carry an N-linked (GlcNAc...) asparagine glycan. Active-site residues include Asp-322 and His-325.

It belongs to the 'GDSL' lipolytic enzyme family.

The protein resides in the secreted. This Arabidopsis thaliana (Mouse-ear cress) protein is GDSL esterase/lipase At5g37690.